The primary structure comprises 411 residues: Corticotropin-releasing factor receptor 2 (411 aa).

The not cleaved signal peptide spans 1–19; sequence MDAALLHSLLEANCSLALA. Residues 1–108 are Extracellular-facing; sequence MDAALLHSLL…EPILDDKQRK (108 aa). N-linked (GlcNAc...) asparagine glycosylation is found at Asn-13, Asn-41, Asn-74, Asn-86, and Asn-94. 4 cysteine pairs are disulfide-bonded: Cys-14–Cys-50, Cys-40–Cys-83, Trp-51–Arg-77, and Cys-64–Cys-98. Residues 109 to 139 form a helical membrane-spanning segment; sequence YDLHYRIALVVNYLGHCVSVAALVAAFLLFL. Over 140–146 the chain is Cytoplasmic; the sequence is ALRSIRC. The chain crosses the membrane as a helical span at residues 147-171; that stretch reads LRNVIHWNLITTFILRNVMWFLLQL. Residues 172–185 are Extracellular-facing; the sequence is VDHEVHESNEVWCR. Cys-184 and Cys-254 are disulfide-bonded. Residues 186–214 form a helical membrane-spanning segment; the sequence is CITTIFNYFVVTNFFWMFVEGCYLHTAIV. The Cytoplasmic segment spans residues 215-221; it reads MTYSTER. The chain crosses the membrane as a helical span at residues 222–249; it reads LRKCLFLFIGWCIPFPIIVAWAIGKLYY. Residues 250–265 are Extracellular-facing; that stretch reads ENEQCWFGKEPGDLVD. A helical transmembrane segment spans residues 266 to 291; the sequence is YIYQGPIILVLLINFVFLFNIVRILM. Topologically, residues 292–302 are cytoplasmic; the sequence is TKLRASTTSET. Residues 303–327 traverse the membrane as a helical segment; it reads IQYRKAVKATLVLLPLLGITYMLFF. Topologically, residues 328–334 are extracellular; that stretch reads VNPGEDD. A helical membrane pass occupies residues 335-364; that stretch reads LSQIMFIYFNSFLQSFQGFFVSVFYCFFNG. Residues 365–411 lie on the Cytoplasmic side of the membrane; it reads EVRSAVRKRWHRWQDHHSLRVPMARAMSIPTSPTRISFHSIKQTAAV.

It belongs to the G-protein coupled receptor 2 family. In terms of assembly, monomer. Interacts (via N-terminal extracellular domain) with CRF, UCN, UCN2 and UCN3. Has highest affinity for UCN, and considerably lower affinity for CRF, UNC2 and UCN3. An N-glycosylation site within the signal peptide impedes its proper cleavage and function.

It localises to the cell membrane. In terms of biological role, G-protein coupled receptor for CRH (corticotropin-releasing factor), UCN (urocortin), UCN2 and UCN3. Has high affinity for UCN. Ligand binding causes a conformation change that triggers signaling via guanine nucleotide-binding proteins (G proteins) and down-stream effectors, such as adenylate cyclase. Promotes the activation of adenylate cyclase, leading to increased intracellular cAMP levels. In Homo sapiens (Human), this protein is Corticotropin-releasing factor receptor 2 (CRHR2).